A 310-amino-acid chain; its full sequence is GMP synthase [glutamine-hydrolyzing] subunit B (310 aa).

The GMPS ATP-PPase domain occupies 2–185 (FDPKKFIDEA…LGLPDSIVYR (184 aa)). Residue 29–35 (SGGVDSS) participates in ATP binding.

In terms of assembly, heterodimer composed of a glutamine amidotransferase subunit (A) and a GMP-binding subunit (B).

The catalysed reaction is XMP + L-glutamine + ATP + H2O = GMP + L-glutamate + AMP + diphosphate + 2 H(+). The protein operates within purine metabolism; GMP biosynthesis; GMP from XMP (L-Gln route): step 1/1. Its function is as follows. Catalyzes the synthesis of GMP from XMP. The protein is GMP synthase [glutamine-hydrolyzing] subunit B (guaAB) of Methanocaldococcus jannaschii (strain ATCC 43067 / DSM 2661 / JAL-1 / JCM 10045 / NBRC 100440) (Methanococcus jannaschii).